The primary structure comprises 104 residues: L-rhamnose mutarotase (104 aa).

Residue tyrosine 18 participates in substrate binding. The active-site Proton donor is the histidine 22. Substrate contacts are provided by residues tyrosine 41 and 76–77 (WW).

This sequence belongs to the rhamnose mutarotase family. In terms of assembly, homodimer.

Its subcellular location is the cytoplasm. It catalyses the reaction alpha-L-rhamnose = beta-L-rhamnose. It participates in carbohydrate metabolism; L-rhamnose metabolism. In terms of biological role, involved in the anomeric conversion of L-rhamnose. This is L-rhamnose mutarotase from Opitutus terrae (strain DSM 11246 / JCM 15787 / PB90-1).